Reading from the N-terminus, the 100-residue chain is Large ribosomal subunit protein uL23 (100 aa).

It belongs to the universal ribosomal protein uL23 family. Part of the 50S ribosomal subunit. Contacts protein L29, and trigger factor when it is bound to the ribosome.

In terms of biological role, one of the early assembly proteins it binds 23S rRNA. One of the proteins that surrounds the polypeptide exit tunnel on the outside of the ribosome. Forms the main docking site for trigger factor binding to the ribosome. This is Large ribosomal subunit protein uL23 from Dechloromonas aromatica (strain RCB).